Reading from the N-terminus, the 459-residue chain is Serine permease SerP1 (459 aa).

Helical transmembrane passes span 19-39 (IQLI…AGKT), 42-62 (MTGP…FFFL), 97-117 (SYWL…GTYI), 119-139 (FWLP…LLFG), 153-173 (FWFA…AIIL), 212-232 (FVGA…IGMT), 254-274 (ILLF…WHYI), 281-301 (FVIV…NFVV), 341-361 (AGIP…APVL), 370-390 (AFNF…FITL), 412-432 (PTIA…SLFF), and 436-456 (TFYP…YSHF).

It belongs to the amino acid-polyamine-organocation (APC) superfamily. Amino acid transporter (AAT) (TC 2.A.3.1) family.

The protein localises to the cell membrane. Transports L-serine, L-threonine and L-cysteine with high affinity. Stereoselective, with a strong preference for L-serine. Is the main L-serine transporter and is responsible for optimal growth in media containing free amino acids as the sole source of amino acids. Is also the main transporter for L-threonine. The chain is Serine permease SerP1 from Lactococcus lactis subsp. cremoris (strain MG1363).